Reading from the N-terminus, the 199-residue chain is Recombination protein RecR (199 aa).

Residues 57–72 (CEKCNNFTEEVVCELC) form a C4-type zinc finger. The Toprim domain maps to 80-175 (ALLCVVEMPA…KITRIARGLP (96 aa)).

It belongs to the RecR family.

In terms of biological role, may play a role in DNA repair. It seems to be involved in an RecBC-independent recombinational process of DNA repair. It may act with RecF and RecO. The chain is Recombination protein RecR from Nitrosospira multiformis (strain ATCC 25196 / NCIMB 11849 / C 71).